Reading from the N-terminus, the 116-residue chain is PTS system galactose-specific EIIA component (116 aa).

The PTS EIIA type-3 domain maps to 11-109 (DDYMGVVMGI…AVEVVGQERR (99 aa)). H85 acts as the Tele-phosphohistidine intermediate in catalysis. At H85 the chain carries Phosphohistidine; by HPr. D88 is a Mg(2+) binding site.

As to quaternary structure, homotrimer. Requires Mg(2+) as cofactor.

Its function is as follows. The phosphoenolpyruvate-dependent sugar phosphotransferase system (sugar PTS), a major carbohydrate active transport system, catalyzes the phosphorylation of incoming sugar substrates concomitantly with their translocation across the cell membrane. Involved in galactose transport with PtcB and Lmg_0963. The sequence is that of PTS system galactose-specific EIIA component from Lactococcus lactis subsp. cremoris (strain MG1363).